Consider the following 151-residue polypeptide: MTIWIDADACPVPVREMVLRAGQRTATALVFVANSPLPVPRRALVKTVQVAQGFDVADNYISQHAVINDLVITQDIPLAAEIVEKGITALNPRGELYTEANIRQRLAMRNLSEELRSMGQISGGPNKFGDKEKQNFANALDRWLQKAKKTT.

It belongs to the UPF0178 family.

The polypeptide is UPF0178 protein Ping_0754 (Psychromonas ingrahamii (strain DSM 17664 / CCUG 51855 / 37)).